Consider the following 204-residue polypeptide: MGAYKYLEELERKKQSDVLRFLQRVRVWEYRQKNVIHRAARPTRPDKARRLGYKAKQGFVIYRVRVRRGNRKRPVPKGATYGKPTNQGVNELKYQRSLRATAEERVGRRAANLRVLNSYWVNQDSTYKYFEVILVDPQHKAIRRDARYNWICNPVHKHREARGLTATGKKSRGINKGHKFNNTKAGRRKTWKRQNTLSLWRYRK.

Residues 165-185 (TATGKKSRGINKGHKFNNTKA) are disordered. Residues 169-185 (KKSRGINKGHKFNNTKA) are compositionally biased toward basic residues.

Belongs to the eukaryotic ribosomal protein eL15 family. As to quaternary structure, component of the large ribosomal subunit (LSU). Mature yeast ribosomes consist of a small (40S) and a large (60S) subunit. The 40S small subunit contains 1 molecule of ribosomal RNA (18S rRNA) and 33 different proteins (encoded by 57 genes). The large 60S subunit contains 3 rRNA molecules (25S, 5.8S and 5S rRNA) and 46 different proteins (encoded by 81 genes).

The protein resides in the cytoplasm. In terms of biological role, component of the ribosome, a large ribonucleoprotein complex responsible for the synthesis of proteins in the cell. The small ribosomal subunit (SSU) binds messenger RNAs (mRNAs) and translates the encoded message by selecting cognate aminoacyl-transfer RNA (tRNA) molecules. The large subunit (LSU) contains the ribosomal catalytic site termed the peptidyl transferase center (PTC), which catalyzes the formation of peptide bonds, thereby polymerizing the amino acids delivered by tRNAs into a polypeptide chain. The nascent polypeptides leave the ribosome through a tunnel in the LSU and interact with protein factors that function in enzymatic processing, targeting, and the membrane insertion of nascent chains at the exit of the ribosomal tunnel. In Saccharomyces cerevisiae (strain ATCC 204508 / S288c) (Baker's yeast), this protein is Large ribosomal subunit protein eL15B.